A 1255-amino-acid chain; its full sequence is Bifunctional autolysin (1255 aa).

The first 36 residues, 1-36 (MLGVINRMAKKFNYKLPSMVALTLVGSAVTAHQVQA), serve as a signal peptide directing secretion. 2 disordered regions span residues 110-141 (GDTR…NTNV) and 193-218 (VTTF…KYKP). Residues 199–775 (SAQPRSVAAT…VAQPKTAVKA (577 aa)) are N-acetylmuramoyl-L-alanine amidase. GW domains follow at residues 442–516 (TVAA…YNTA), 518–592 (SPVN…DTAK), 611–685 (TVSS…YNNA), 687–761 (SPVN…VPAA), 783–858 (TTQT…VQNL), 860–935 (KEVK…APTA), and 942–1016 (AAKD…KELI). The tract at residues 776–1255 (YTVTKPQTTQ…GKYFDIPQYK (480 aa)) is endo-beta-N-acetylglucosaminidase.

The protein in the N-terminal section; belongs to the N-acetylmuramoyl-L-alanine amidase 2 family. This sequence in the C-terminal section; belongs to the glycosyl hydrolase 73 family. In terms of assembly, oligomer; forms a ring structure at the cell surface which is important for efficient partitioning of daughter cells after cell division. Undergoes proteolytic processing to generate the two extracellular lytic enzymes, probably at the septal region on the cell surface.

Its subcellular location is the secreted. It carries out the reaction Hydrolyzes the link between N-acetylmuramoyl residues and L-amino acid residues in certain cell-wall glycopeptides.. The catalysed reaction is an N(4)-(oligosaccharide-(1-&gt;3)-[oligosaccharide-(1-&gt;6)]-beta-D-Man-(1-&gt;4)-beta-D-GlcNAc-(1-&gt;4)-alpha-D-GlcNAc)-L-asparaginyl-[protein] + H2O = an oligosaccharide-(1-&gt;3)-[oligosaccharide-(1-&gt;6)]-beta-D-Man-(1-&gt;4)-D-GlcNAc + N(4)-(N-acetyl-beta-D-glucosaminyl)-L-asparaginyl-[protein]. In terms of biological role, endohydrolysis of the di-N-acetylchitobiosyl unit in high-mannose glycopeptides and glycoproteins containing the -[(Man)5(GlcNAc)2]-Asn structure. One N-acetyl-D-glucosamine residue remains attached to the protein; the rest of the oligosaccharide is released intact. Cleaves the peptidoglycan connecting the daughter cells at the end of the cell division cycle, resulting in the separation of the two newly divided cells. Acts as an autolysin in penicillin-induced lysis. The protein is Bifunctional autolysin (atl) of Staphylococcus aureus (strain Mu3 / ATCC 700698).